The sequence spans 622 residues: MDAHQKQSLPAVTLAAIGVVYGDIGTSPLYTFKECFSPHIGLPPTQQVVYGFLSLIFWALILVVSVKYLAFVLRADNRGEGGILTLMSLAGRNTYAGTTTVLLVLGLIGGGFFYGEVVITPAMSVLSALEGLSVATPALTPYILPVAIAVLTALFVIQKHGTGSVGKLFGPVMLLWFFSLGTLGAISIFKNPQVLAALNPHWAIQFFLTYKTVAFFSLGSVVLAITGVEALYADMGHFGKFPIQLAWFTVALPALLLNYFGQGALILSNPEAIANPFFMLAPEWLVFPMVILSTMATVIASQAVISGVFSLTRQAVRLGYLPGMNILHTSEVEAGQIYIPFVNWMLYIAVLIVVVTFRESTNLAAAYGIAVTGTMVITTILACTVAHYNWDWPRRVVKIILISLLLIDVPLFLANVVKFFAGGWLPVMLGAIMFMVMATWKWERFLLLRQLSRMSMPLESFVAMVEKETPQKVPGTAIYLSRTQQGIPHALLHNLNHNHVLHERIVLMTFRTQDVPYVDPDQHIEIKSLSPNVWRISATYGFHETPDVYEVFRRCAMKGMAFNLNTTSFFLSRETLLPSHRSILARLRAALFIWLSKNSLRTNDFIHVPADRVVEMGVQVEV.

12 helical membrane-spanning segments follow: residues 9–29 (LPAV…TSPL), 52–72 (FLSL…LAFV), 101–121 (VLLV…VITP), 137–157 (PALT…LFVI), 169–189 (FGPV…ISIF), 213–233 (VAFF…ALYA), 247–267 (WFTV…ALIL), 287–309 (FPMV…SGVF), 337–357 (IYIP…VVTF), 363–383 (LAAA…ILAC), 396–416 (VVKI…LANV), and 419–439 (FFAG…VMAT).

This sequence belongs to the HAK/KUP transporter (TC 2.A.72) family.

Its subcellular location is the cell inner membrane. It catalyses the reaction K(+)(in) + H(+)(in) = K(+)(out) + H(+)(out). Its function is as follows. Transport of potassium into the cell. Likely operates as a K(+):H(+) symporter. This is Probable potassium transport system protein Kup from Tolumonas auensis (strain DSM 9187 / NBRC 110442 / TA 4).